Reading from the N-terminus, the 136-residue chain is Large ribosomal subunit protein bL17 (136 aa).

Belongs to the bacterial ribosomal protein bL17 family. Part of the 50S ribosomal subunit. Contacts protein L32.

The protein is Large ribosomal subunit protein bL17 of Akkermansia muciniphila (strain ATCC BAA-835 / DSM 22959 / JCM 33894 / BCRC 81048 / CCUG 64013 / CIP 107961 / Muc).